The primary structure comprises 252 residues: Probable transcriptional regulatory protein TW504 (252 aa).

Belongs to the TACO1 family.

The protein localises to the cytoplasm. The sequence is that of Probable transcriptional regulatory protein TW504 from Tropheryma whipplei (strain TW08/27) (Whipple's bacillus).